We begin with the raw amino-acid sequence, 1379 residues long: DNA-directed RNA polymerase subunit beta (1379 aa).

This sequence belongs to the RNA polymerase beta chain family. In terms of assembly, the RNAP catalytic core consists of 2 alpha, 1 beta, 1 beta' and 1 omega subunit. When a sigma factor is associated with the core the holoenzyme is formed, which can initiate transcription.

It carries out the reaction RNA(n) + a ribonucleoside 5'-triphosphate = RNA(n+1) + diphosphate. Its function is as follows. DNA-dependent RNA polymerase catalyzes the transcription of DNA into RNA using the four ribonucleoside triphosphates as substrates. In Rhizobium leguminosarum bv. trifolii (strain WSM2304), this protein is DNA-directed RNA polymerase subunit beta.